The chain runs to 344 residues: UDP-N-acetylglucosamine transporter UGNT1 (344 aa).

Residues 1-23 form a disordered region; the sequence is MRNNPVLPVSDPPLAGENDSDGK. 9 helical membrane-spanning segments follow: residues 41–61, 66–86, 92–112, 114–134, 167–187, 194–214, 226–246, 264–284, and 304–324; these read YAAL…KAAL, FPCV…FLYA, IISF…FVPV, TLFH…ASMA, YTRS…FAGA, FYGY…LATI, FGLM…WTFI, FMVV…CIFL, and FTVG…MNVI.

This sequence belongs to the TPT transporter family. UGnT (TC 2.A.7.15) subfamily. Expressed in roots, leaves, stems, flowers and siliques.

The protein localises to the golgi apparatus membrane. Functionally, mediates the transport of UDP-N-acetylglucosamine (UDP-GlcNAc) across the Golgi apparatus membrane. Delivers an essential substrate for the maturation of N-glycans and the GlcNAc-containing glycosyl inositol phosphorylceramide (GIPC) class of sphingolipids in the Golgi apparatus. The polypeptide is UDP-N-acetylglucosamine transporter UGNT1 (Arabidopsis thaliana (Mouse-ear cress)).